The chain runs to 555 residues: Dimethylaniline monooxygenase [N-oxide-forming] 4 (555 aa).

Residues 9–13 (GAGVS), Glu32, and 40–41 (LW) contribute to the FAD site. Residues 60-61 (TN) and 195-198 (SGGD) contribute to the NADP(+) site. The chain crosses the membrane as a helical span at residues 515–532 (YLKVWGAPLLLASVLLIC).

This sequence belongs to the FMO family. FAD is required as a cofactor. In terms of tissue distribution, kidney and liver.

It localises to the microsome membrane. The protein localises to the endoplasmic reticulum membrane. It carries out the reaction N,N-dimethylaniline + NADPH + O2 + H(+) = N,N-dimethylaniline N-oxide + NADP(+) + H2O. Its function is as follows. This protein is involved in the oxidative metabolism of a variety of xenobiotics such as drugs and pesticides. The sequence is that of Dimethylaniline monooxygenase [N-oxide-forming] 4 (FMO4) from Oryctolagus cuniculus (Rabbit).